We begin with the raw amino-acid sequence, 160 residues long: Transcription antitermination protein NusB (160 aa).

Belongs to the NusB family.

Its function is as follows. Involved in transcription antitermination. Required for transcription of ribosomal RNA (rRNA) genes. Binds specifically to the boxA antiterminator sequence of the ribosomal RNA (rrn) operons. The chain is Transcription antitermination protein NusB from Salinibacter ruber (strain DSM 13855 / M31).